A 288-amino-acid chain; its full sequence is Cell division protein ZipA (288 aa).

Residue M1 is a topological domain, periplasmic. The chain crosses the membrane as a helical span at residues E2–F22. Topologically, residues D23–R288 are cytoplasmic. Basic and acidic residues-rich tracts occupy residues K66 to L75 and R83 to S93. Residues K66–K141 are disordered. The span at G106–G117 shows a compositional bias: low complexity.

It belongs to the ZipA family. Interacts with FtsZ via their C-terminal domains.

It localises to the cell inner membrane. In terms of biological role, essential cell division protein that stabilizes the FtsZ protofilaments by cross-linking them and that serves as a cytoplasmic membrane anchor for the Z ring. Also required for the recruitment to the septal ring of downstream cell division proteins. The chain is Cell division protein ZipA from Pseudomonas fluorescens (strain Pf0-1).